The primary structure comprises 211 residues: FMN-dependent NADH:quinone oxidoreductase 3 (211 aa).

An FMN-binding site is contributed by 102–105 (MWNF).

This sequence belongs to the azoreductase type 1 family. As to quaternary structure, homodimer. FMN serves as cofactor.

The enzyme catalyses 2 a quinone + NADH + H(+) = 2 a 1,4-benzosemiquinone + NAD(+). The catalysed reaction is N,N-dimethyl-1,4-phenylenediamine + anthranilate + 2 NAD(+) = 2-(4-dimethylaminophenyl)diazenylbenzoate + 2 NADH + 2 H(+). Quinone reductase that provides resistance to thiol-specific stress caused by electrophilic quinones. In terms of biological role, also exhibits azoreductase activity. Catalyzes the reductive cleavage of the azo bond in aromatic azo compounds to the corresponding amines. This is FMN-dependent NADH:quinone oxidoreductase 3 from Bacillus anthracis.